The chain runs to 420 residues: LanC-like protein 3 homolog (420 aa).

It belongs to the LanC-like protein family.

This Drosophila pseudoobscura pseudoobscura (Fruit fly) protein is LanC-like protein 3 homolog.